Reading from the N-terminus, the 264-residue chain is Glutamate racemase (264 aa).

Substrate-binding positions include 10–11 (DS) and 42–43 (YG). C73 (proton donor/acceptor) is an active-site residue. Position 74-75 (74-75 (NT)) interacts with substrate. C183 (proton donor/acceptor) is an active-site residue. Substrate is bound at residue 184–185 (TH).

This sequence belongs to the aspartate/glutamate racemases family.

The enzyme catalyses L-glutamate = D-glutamate. It participates in cell wall biogenesis; peptidoglycan biosynthesis. Functionally, provides the (R)-glutamate required for cell wall biosynthesis. In Streptococcus mutans serotype c (strain ATCC 700610 / UA159), this protein is Glutamate racemase.